The following is a 134-amino-acid chain: Small ribosomal subunit protein uS8 (134 aa).

It belongs to the universal ribosomal protein uS8 family. As to quaternary structure, part of the 30S ribosomal subunit. Contacts proteins S5 and S12.

Functionally, one of the primary rRNA binding proteins, it binds directly to 16S rRNA central domain where it helps coordinate assembly of the platform of the 30S subunit. The protein is Small ribosomal subunit protein uS8 of Pseudothermotoga lettingae (strain ATCC BAA-301 / DSM 14385 / NBRC 107922 / TMO) (Thermotoga lettingae).